A 591-amino-acid polypeptide reads, in one-letter code: NADP-dependent malic enzyme (591 aa).

Tyr-139 functions as the Proton donor in the catalytic mechanism. Arg-192 serves as a coordination point for NAD(+). Lys-210 functions as the Proton acceptor in the catalytic mechanism. A divalent metal cation contacts are provided by Glu-282, Asp-283, and Asp-306. NAD(+) is bound at residue Asp-306. Position 335-351 (335-351) interacts with NADP(+); sequence LFLGAGEAGTGIAELIA. Asn-447 contacts NAD(+).

Belongs to the malic enzymes family. In terms of assembly, homotetramer. It depends on Mg(2+) as a cofactor. Requires Mn(2+) as cofactor.

Its subcellular location is the cytoplasm. The enzyme catalyses (S)-malate + NADP(+) = pyruvate + CO2 + NADPH. It catalyses the reaction oxaloacetate + H(+) = pyruvate + CO2. The protein is NADP-dependent malic enzyme of Vitis vinifera (Grape).